The chain runs to 208 residues: Ras-related protein Rab-6A (208 aa).

Ser-2 is modified (N-acetylserine). The GTP site is built by Ser-23, Val-24, Gly-25, Lys-26, Thr-27, Ser-28, Asp-39, Asn-40, Tyr-42, and Thr-45. Thr-27 contributes to the Mg(2+) binding site. Positions 32–50 (RFMYDSFDNTYQATIGIDF) match the Switch 1 motif. Mg(2+) contacts are provided by Thr-45 and Asp-68. The Switch 2 signature appears at 69-88 (TAGQERFRSLIPSYIRDSTV). Gly-71 contacts GTP. Tyr-82 carries the post-translational modification O-AMP-tyrosine; by Legionella DrrA. The GTP site is built by Asn-126, Lys-127, Asp-129, Ser-156, Ala-157, and Lys-158. Residue Ser-184 is modified to Phosphoserine. 2 S-geranylgeranyl cysteine lipidation sites follow: Cys-206 and Cys-208. Residue Cys-208 is modified to Cysteine methyl ester.

The protein belongs to the small GTPase superfamily. Rab family. As to quaternary structure, interacts (GTP-bound) with DYNLRB1; the interaction is direct. Interacts with BICD1. Interacts with BICD2; the interaction is direct. Interacts (GTP-bound) with VPS13B. In terms of assembly, interacts with BICD1. Interacts (GDP-bound) with DYNLRB1; the interaction is direct. Interacts (GTP-bound) with VPS13B. Interacts with BICDL1; leads to its accumulation in the pericentrosomal region. Interacts with SCYL1BP1. Interacts with VSP52. Interacts with RABGAP1. Interacts with GCC2 (via its GRIP domain). Interacts with RAB6IP1 (via its RUN 1 domain). Interacts with TMF1. Interacts with CIMAP3. Interacts (GTP-bound) with APBA1/MINT1 isoform 2, also called Mint1_826, but not with isoform 1. Interacts with RIC1; the interaction is direct with a preference for RAB6A-GDP. Interacts with RGP1; the interaction is direct with a preference for RAB6A-GDP. As to quaternary structure, (Microbial infection) Interacts with human cytomegalovirus protein UL32. Mg(2+) is required as a cofactor. Post-translationally, prenylated. As to expression, ubiquitous.

It is found in the golgi apparatus membrane. It localises to the cytoplasmic vesicle. The protein localises to the secretory vesicle. The protein resides in the acrosome membrane. The enzyme catalyses GTP + H2O = GDP + phosphate + H(+). With respect to regulation, regulated by guanine nucleotide exchange factors (GEFs) which promote the exchange of bound GDP for free GTP. Regulated by GTPase activating proteins (GAPs) which increase the GTP hydrolysis activity. Inhibited by GDP dissociation inhibitors (GDIs). Functionally, the small GTPases Rab are key regulators of intracellular membrane trafficking, from the formation of transport vesicles to their fusion with membranes. Rabs cycle between an inactive GDP-bound form and an active GTP-bound form that is able to recruit to membranes different sets of downstream effectors directly responsible for vesicle formation, movement, tethering and fusion. RAB6A acts as a regulator of COPI-independent retrograde transport from the Golgi apparatus towards the endoplasmic reticulum (ER). Has a low GTPase activity. Recruits VPS13B to the Golgi membrane. Plays a role in neuron projection development. This is Ras-related protein Rab-6A from Homo sapiens (Human).